The primary structure comprises 409 residues: E3 ubiquitin-protein ligase MARCHF4 (409 aa).

An N-terminal signal peptide occupies residues 1–17 (MLMPLGGLLWWWCCCCG). A disordered region spans residues 92-133 (GPREAVGRETPPLPPPPPLPPSGDDDWDGPATGPPASLLSSA). Residues 102-112 (PPLPPPPPLPP) are compositionally biased toward pro residues. Residues 154–214 (DSGMRTPLCR…ELCYYKYHVI (61 aa)) form an RING-CH-type zinc finger. C162, C165, C178, C180, H188, C191, C204, and C207 together coordinate Zn(2+). 2 helical membrane-spanning segments follow: residues 242-262 (LGSL…FSPS) and 271-291 (LFQI…GLII). 2 disordered regions span residues 323 to 372 (EDQK…GPVS) and 389 to 409 (PHDQ…VTTV). Over residues 328–343 (GGRTNLQTSSSAQANL) the composition is skewed to polar residues.

The protein resides in the golgi apparatus membrane. The enzyme catalyses S-ubiquitinyl-[E2 ubiquitin-conjugating enzyme]-L-cysteine + [acceptor protein]-L-lysine = [E2 ubiquitin-conjugating enzyme]-L-cysteine + N(6)-ubiquitinyl-[acceptor protein]-L-lysine.. Its pathway is protein modification; protein ubiquitination. Its function is as follows. E3 ubiquitin-protein ligase that may mediate ubiquitination of MHC-I and CD4, and promote their subsequent endocytosis and sorting to lysosomes via multivesicular bodies. E3 ubiquitin ligases accept ubiquitin from an E2 ubiquitin-conjugating enzyme in the form of a thioester and then directly transfer the ubiquitin to targeted substrates. This chain is E3 ubiquitin-protein ligase MARCHF4 (Marchf4), found in Mus musculus (Mouse).